The sequence spans 448 residues: Adenylosuccinate synthetase (448 aa).

GTP is bound by residues 22–28 (GDEGKGK) and 50–52 (GHT). The active-site Proton acceptor is aspartate 23. Positions 23 and 50 each coordinate Mg(2+). Residues 23–26 (DEGK), 48–51 (NAGH), threonine 139, arginine 153, glutamine 234, threonine 249, and arginine 321 contribute to the IMP site. The active-site Proton donor is the histidine 51. 317–323 (SVTGRPR) provides a ligand contact to substrate. Residues arginine 323, 349–351 (KLD), and 431–433 (STG) contribute to the GTP site.

It belongs to the adenylosuccinate synthetase family. In terms of assembly, homodimer. Mg(2+) is required as a cofactor.

The protein resides in the cytoplasm. The enzyme catalyses IMP + L-aspartate + GTP = N(6)-(1,2-dicarboxyethyl)-AMP + GDP + phosphate + 2 H(+). It functions in the pathway purine metabolism; AMP biosynthesis via de novo pathway; AMP from IMP: step 1/2. In terms of biological role, plays an important role in the de novo pathway of purine nucleotide biosynthesis. Catalyzes the first committed step in the biosynthesis of AMP from IMP. The protein is Adenylosuccinate synthetase of Paraburkholderia phytofirmans (strain DSM 17436 / LMG 22146 / PsJN) (Burkholderia phytofirmans).